The primary structure comprises 271 residues: Short chain dehydrogenase virK (271 aa).

NADP(+)-binding residues include L13, D59, N87, Y168, K172, V201, and T203. Y168 serves as the catalytic Proton donor. K172 acts as the Lowers pKa of active site Tyr in catalysis.

This sequence belongs to the short-chain dehydrogenases/reductases (SDR) family.

Its pathway is secondary metabolite biosynthesis. In terms of biological role, short chain dehydrogenase; part of the gene cluster that mediates the biosynthesis of virensols and trichoxide, fungal natural products that contain or are derived from a salicylaldehyde core. The pathway begins with the synthesis of the reduced chain in virensol C by the highly reducing polyketide synthase virA via condensation of one acetate and 8 malonate units. VirA has interesting programming rules since the first 2 ketides are fully reduced, the 3 following ketides undergo beta-dehydration, and the last 3 ketides are only reduced to beta-hydroxys to yield the trihydroxy portion. The production of aldehyde virensol C by virA alone is surprising, since virA does not contain a reductase (R) domain that is typically associated with reductive product release in HRPKS. The cupin-domain enzyme virC is involved in enhancing virA product turnover. The short-chain dehydrogenase virB then oxidizes the C-7 alcohol of virensol C to a ketone, yielding virensol D. Virensol D is further transformed to salicylaldehyde 5-deoxyaurocitrin by the short-chain dehydrogenase virD. VirD catalyzes the dehydrogenation of C-3 to form the beta-ketone aldehyde, which is followed by the generation of the nucleophilic C-2 that is required for the intramolecular aldol condensation between C-2 and C-7, itself followed by dehydration and aromatization which leads to salicylaldehyde 5-deoxyaurocitrin. While the dehydrogenation of virensol D is definitely catalyzed by virD, the aldol condensation and dehydration may be uncatalyzed or assisted by virD. The short chain dehydrogenase virG then converts salicylaldehyde 5-deoxyaurocitrin into virensol B which is further hydroxylated by the cytochrome P450 monooxygenase virE to yield the hydroquinone virensol A. VirI then may oxidize virensol A to form the quinone, while virH performs the epoxidation. Finally, the two remaining short-chain dehydrogenases, virK and virL, are probably responsible for reducing the ketones to the corresponding alcohols to furnish the epoxycyclohexanol structure in trichoxide. The polypeptide is Short chain dehydrogenase virK (Hypocrea virens (strain Gv29-8 / FGSC 10586) (Gliocladium virens)).